Here is a 221-residue protein sequence, read N- to C-terminus: Transmembrane emp24 domain-containing protein 3 (221 aa).

The N-terminal stretch at 1-30 is a signal peptide; that stretch reads MGNEVPRASSFQMLMLLLLLLLLRAERLRG. At 31–184 the chain is on the lumenal side; sequence AELTFELPDN…RAEDLNSRVS (154 aa). The region spanning 42 to 124 is the GOLD domain; it reads KQCFHEEVEQ…HKTVYFDFQV (83 aa). Arg103 is modified (dimethylated arginine). Residues 185–205 form a helical membrane-spanning segment; it reads YWSVGETIALFVVSFSQVLLL. Over 206 to 221 the chain is Cytoplasmic; the sequence is KSFFTEKRPINRAVHS. A COPII vesicle coat-binding motif is present at residues 208–209; it reads FF. The COPI vesicle coat-binding motif lies at 208-221; it reads FFTEKRPINRAVHS.

It belongs to the EMP24/GP25L family. In terms of assembly, monomer in endoplasmic reticulum, endoplasmic reticulum-Golgi intermediate compartment and cis-Golgi network. Interacts (via C-terminus) with COPG1; the interaction involves dimeric TMED3; however, there are conflicting reports on the interaction. Interacts with GORASP1 and GORASP2.

The protein resides in the endoplasmic reticulum-Golgi intermediate compartment membrane. It localises to the golgi apparatus. Its subcellular location is the cis-Golgi network membrane. The protein localises to the golgi stack membrane. It is found in the endoplasmic reticulum membrane. The protein resides in the cytoplasmic vesicle. It localises to the COPI-coated vesicle membrane. Its function is as follows. Potential role in vesicular protein trafficking, mainly in the early secretory pathway. Contributes to the coupled localization of TMED2 and TMED10 in the cis-Golgi network. In Rattus norvegicus (Rat), this protein is Transmembrane emp24 domain-containing protein 3 (Tmed3).